Here is a 466-residue protein sequence, read N- to C-terminus: Arginine biosynthesis bifunctional protein ArgJ, mitochondrial (466 aa).

Substrate is bound by residues Thr-194, Lys-223, Thr-234, Glu-321, Asn-461, and Thr-466. Residue Thr-234 is the Nucleophile of the active site.

It belongs to the ArgJ family. In terms of assembly, heterodimer of an alpha and a beta chain. In terms of processing, the alpha and beta chains are autoproteolytically processed from a single precursor protein within the mitochondrion.

Its subcellular location is the mitochondrion matrix. The enzyme catalyses N(2)-acetyl-L-ornithine + L-glutamate = N-acetyl-L-glutamate + L-ornithine. It catalyses the reaction L-glutamate + acetyl-CoA = N-acetyl-L-glutamate + CoA + H(+). Its pathway is amino-acid biosynthesis; L-arginine biosynthesis; L-ornithine and N-acetyl-L-glutamate from L-glutamate and N(2)-acetyl-L-ornithine (cyclic): step 1/1. It participates in amino-acid biosynthesis; L-arginine biosynthesis; N(2)-acetyl-L-ornithine from L-glutamate: step 1/4. Its function is as follows. Catalyzes two activities which are involved in the cyclic version of arginine biosynthesis: the synthesis of acetylglutamate from glutamate and acetyl-CoA, and of ornithine by transacetylation between acetylornithine and glutamate. This is Arginine biosynthesis bifunctional protein ArgJ, mitochondrial from Aspergillus flavus (strain ATCC 200026 / FGSC A1120 / IAM 13836 / NRRL 3357 / JCM 12722 / SRRC 167).